The chain runs to 317 residues: Cytochrome f (317 aa).

Residues M1 to A34 form the signal peptide. Heme contacts are provided by Y35, C55, C58, and H59. Residues V284 to K304 traverse the membrane as a helical segment.

It belongs to the cytochrome f family. In terms of assembly, the 4 large subunits of the cytochrome b6-f complex are cytochrome b6, subunit IV (17 kDa polypeptide, PetD), cytochrome f and the Rieske protein, while the 4 small subunits are PetG, PetL, PetM and PetN. The complex functions as a dimer. Heme serves as cofactor.

The protein localises to the cellular thylakoid membrane. Component of the cytochrome b6-f complex, which mediates electron transfer between photosystem II (PSII) and photosystem I (PSI), cyclic electron flow around PSI, and state transitions. The polypeptide is Cytochrome f (Prochlorococcus marinus (strain MIT 9215)).